A 175-amino-acid polypeptide reads, in one-letter code: Ribosome maturation factor RimM (175 aa).

One can recognise a PRC barrel domain in the interval glutamate 100–tryptophan 174.

It belongs to the RimM family. In terms of assembly, binds ribosomal protein uS19.

It localises to the cytoplasm. Functionally, an accessory protein needed during the final step in the assembly of 30S ribosomal subunit, possibly for assembly of the head region. Essential for efficient processing of 16S rRNA. May be needed both before and after RbfA during the maturation of 16S rRNA. It has affinity for free ribosomal 30S subunits but not for 70S ribosomes. The protein is Ribosome maturation factor RimM of Buchnera aphidicola subsp. Schizaphis graminum (strain Sg).